Here is a 188-residue protein sequence, read N- to C-terminus: Probable nicotinate-nucleotide adenylyltransferase (188 aa).

Belongs to the NadD family.

The enzyme catalyses nicotinate beta-D-ribonucleotide + ATP + H(+) = deamido-NAD(+) + diphosphate. Its pathway is cofactor biosynthesis; NAD(+) biosynthesis; deamido-NAD(+) from nicotinate D-ribonucleotide: step 1/1. In terms of biological role, catalyzes the reversible adenylation of nicotinate mononucleotide (NaMN) to nicotinic acid adenine dinucleotide (NaAD). The chain is Probable nicotinate-nucleotide adenylyltransferase from Listeria welshimeri serovar 6b (strain ATCC 35897 / DSM 20650 / CCUG 15529 / CIP 8149 / NCTC 11857 / SLCC 5334 / V8).